Here is a 253-residue protein sequence, read N- to C-terminus: Octanoyltransferase (253 aa).

Residues 47–236 enclose the BPL/LPL catalytic domain; that stretch reads PETPDQVWLV…ALCEVLAARE (190 aa). Substrate-binding positions include 87-94, 159-161, and 172-174; these read RGGQITYH, ALG, and GVS. The active-site Acyl-thioester intermediate is cysteine 190.

Belongs to the LipB family.

The protein localises to the cytoplasm. The catalysed reaction is octanoyl-[ACP] + L-lysyl-[protein] = N(6)-octanoyl-L-lysyl-[protein] + holo-[ACP] + H(+). It functions in the pathway protein modification; protein lipoylation via endogenous pathway; protein N(6)-(lipoyl)lysine from octanoyl-[acyl-carrier-protein]: step 1/2. Its function is as follows. Catalyzes the transfer of endogenously produced octanoic acid from octanoyl-acyl-carrier-protein onto the lipoyl domains of lipoate-dependent enzymes. Lipoyl-ACP can also act as a substrate although octanoyl-ACP is likely to be the physiological substrate. The chain is Octanoyltransferase from Cupriavidus pinatubonensis (strain JMP 134 / LMG 1197) (Cupriavidus necator (strain JMP 134)).